Consider the following 282-residue polypeptide: 4-diphosphocytidyl-2-C-methyl-D-erythritol kinase (282 aa).

K9 is a catalytic residue. Residue P98 to S108 participates in ATP binding. D140 is a catalytic residue.

The protein belongs to the GHMP kinase family. IspE subfamily. As to quaternary structure, homodimer.

It catalyses the reaction 4-CDP-2-C-methyl-D-erythritol + ATP = 4-CDP-2-C-methyl-D-erythritol 2-phosphate + ADP + H(+). It participates in isoprenoid biosynthesis; isopentenyl diphosphate biosynthesis via DXP pathway; isopentenyl diphosphate from 1-deoxy-D-xylulose 5-phosphate: step 3/6. In terms of biological role, catalyzes the phosphorylation of the position 2 hydroxy group of 4-diphosphocytidyl-2C-methyl-D-erythritol. The protein is 4-diphosphocytidyl-2-C-methyl-D-erythritol kinase of Salmonella schwarzengrund (strain CVM19633).